A 474-amino-acid chain; its full sequence is MILSSSLRPTILVVGDLMIDHYIWGECERISPEAPVQVIDVKRETKTLGGACNVMSNLIALEASVLSCGVVGEDLAGRELLGFLQELGMESKGIITQKGRPTTQKSRIIASNQQVVRVDWENKSPISEESEEAMIAYIRSKLSLCDAVILSDYGKGVLTPRVCQTIIQMAKTLQKRVLVDPKGRDYSKYRGASLLTPNKKEAKEATGIEINDEASLKKALECLKKECELEFSVITLSEDGIGIFDQALERIPTIAQEVYDVTGAGDTVIASLAYGLSLGYPLRECALFANAAAAVVVGKIGSATATHGEIAEYLHSSHQGESQERILSRDSIQKIAKQWRSRGRKIVFTNGCFDILHAGHVQYLQKAKACGDCLIVGLNSDASVRRLKGELRPINSQEDRALVLSGLEAVDYVVVFDEETPYELIRAIEPDVLVKGGDYEGKEVVGSDLVKEVKLIEFLEGRSTSAVVKKIQGS.

The segment at 1 to 321 (MILSSSLRPT…EYLHSSHQGE (321 aa)) is ribokinase. Position 198–201 (198–201 (NKKE)) interacts with ATP. Residue Asp-266 is part of the active site. The interval 348 to 474 (FTNGCFDILH…SAVVKKIQGS (127 aa)) is cytidylyltransferase.

In the N-terminal section; belongs to the carbohydrate kinase PfkB family. It in the C-terminal section; belongs to the cytidylyltransferase family. As to quaternary structure, homodimer.

The catalysed reaction is D-glycero-beta-D-manno-heptose 7-phosphate + ATP = D-glycero-beta-D-manno-heptose 1,7-bisphosphate + ADP + H(+). It carries out the reaction D-glycero-beta-D-manno-heptose 1-phosphate + ATP + H(+) = ADP-D-glycero-beta-D-manno-heptose + diphosphate. Its pathway is nucleotide-sugar biosynthesis; ADP-L-glycero-beta-D-manno-heptose biosynthesis; ADP-L-glycero-beta-D-manno-heptose from D-glycero-beta-D-manno-heptose 7-phosphate: step 1/4. It functions in the pathway nucleotide-sugar biosynthesis; ADP-L-glycero-beta-D-manno-heptose biosynthesis; ADP-L-glycero-beta-D-manno-heptose from D-glycero-beta-D-manno-heptose 7-phosphate: step 3/4. Functionally, catalyzes the phosphorylation of D-glycero-D-manno-heptose 7-phosphate at the C-1 position to selectively form D-glycero-beta-D-manno-heptose-1,7-bisphosphate. Its function is as follows. Catalyzes the ADP transfer from ATP to D-glycero-beta-D-manno-heptose 1-phosphate, yielding ADP-D-glycero-beta-D-manno-heptose. The chain is Bifunctional protein HldE from Wolinella succinogenes (strain ATCC 29543 / DSM 1740 / CCUG 13145 / JCM 31913 / LMG 7466 / NCTC 11488 / FDC 602W) (Vibrio succinogenes).